A 155-amino-acid polypeptide reads, in one-letter code: Ribosomal RNA large subunit methyltransferase H (155 aa).

S-adenosyl-L-methionine is bound by residues leucine 72, glycine 103, and 122–127 (LSPLTL).

It belongs to the RNA methyltransferase RlmH family. As to quaternary structure, homodimer.

It is found in the cytoplasm. It catalyses the reaction pseudouridine(1915) in 23S rRNA + S-adenosyl-L-methionine = N(3)-methylpseudouridine(1915) in 23S rRNA + S-adenosyl-L-homocysteine + H(+). Functionally, specifically methylates the pseudouridine at position 1915 (m3Psi1915) in 23S rRNA. The sequence is that of Ribosomal RNA large subunit methyltransferase H from Actinobacillus pleuropneumoniae serotype 5b (strain L20).